Reading from the N-terminus, the 485-residue chain is Glucose-6-phosphate 1-dehydrogenase (485 aa).

NADP(+)-binding positions include R46, 89 to 90 (DI), and K144. 4 residues coordinate substrate: H174, K178, E212, and D231. H236 (proton acceptor) is an active-site residue. K334 is a substrate binding site.

The protein belongs to the glucose-6-phosphate dehydrogenase family.

It carries out the reaction D-glucose 6-phosphate + NADP(+) = 6-phospho-D-glucono-1,5-lactone + NADPH + H(+). It participates in carbohydrate degradation; pentose phosphate pathway; D-ribulose 5-phosphate from D-glucose 6-phosphate (oxidative stage): step 1/3. In terms of biological role, catalyzes the oxidation of glucose 6-phosphate to 6-phosphogluconolactone. In Zymomonas mobilis subsp. mobilis (strain ATCC 31821 / ZM4 / CP4), this protein is Glucose-6-phosphate 1-dehydrogenase.